Here is a 246-residue protein sequence, read N- to C-terminus: Cytochrome c oxidase subunit 2 (246 aa).

2 helical membrane passes run 31 to 51 (HMMYYLALMLGLVSYMLYVMM) and 72 to 92 (IMWTMFPAVMLLLMAFPSFML). Positions 175, 210, 212, 214, 218, and 221 each coordinate Cu cation. A Mg(2+)-binding site is contributed by E212.

This sequence belongs to the cytochrome c oxidase subunit 2 family. As to quaternary structure, component of the cytochrome c oxidase (complex IV, CIV), a multisubunit enzyme composed of a catalytic core of 3 subunits and several supernumerary subunits. The complex exists as a monomer or a dimer and forms supercomplexes (SCs) in the inner mitochondrial membrane with ubiquinol-cytochrome c oxidoreductase (cytochrome b-c1 complex, complex III, CIII). Requires Cu cation as cofactor.

The protein resides in the mitochondrion inner membrane. The catalysed reaction is 4 Fe(II)-[cytochrome c] + O2 + 8 H(+)(in) = 4 Fe(III)-[cytochrome c] + 2 H2O + 4 H(+)(out). In terms of biological role, component of the cytochrome c oxidase, the last enzyme in the mitochondrial electron transport chain which drives oxidative phosphorylation. The respiratory chain contains 3 multisubunit complexes succinate dehydrogenase (complex II, CII), ubiquinol-cytochrome c oxidoreductase (cytochrome b-c1 complex, complex III, CIII) and cytochrome c oxidase (complex IV, CIV), that cooperate to transfer electrons derived from NADH and succinate to molecular oxygen, creating an electrochemical gradient over the inner membrane that drives transmembrane transport and the ATP synthase. Cytochrome c oxidase is the component of the respiratory chain that catalyzes the reduction of oxygen to water. Electrons originating from reduced cytochrome c in the intermembrane space (IMS) are transferred via the dinuclear copper A center (CU(A)) of subunit 2 and heme A of subunit 1 to the active site in subunit 1, a binuclear center (BNC) formed by heme A3 and copper B (CU(B)). The BNC reduces molecular oxygen to 2 water molecules using 4 electrons from cytochrome c in the IMS and 4 protons from the mitochondrial matrix. The polypeptide is Cytochrome c oxidase subunit 2 (COX2) (Debaryomyces hansenii (strain ATCC 36239 / CBS 767 / BCRC 21394 / JCM 1990 / NBRC 0083 / IGC 2968) (Yeast)).